A 918-amino-acid polypeptide reads, in one-letter code: MKVARFQKIPNGENETMIPVLTSKKASELPVSEVASILQADLQNGLNKCEVSHRRAFHGWNEFDISEDEPLWKKYISQFKNPLIMLLLASAVISVLMHQFDDAVSITVAILIVVTVAFVQEYRSEKSLEELSKLVPPECHCVREGKLEHTLARDLVPGDTVCLSVGDRVPADLRLFEAVDLSIDESSLTGETTPCSKVTAPQPAATNGDLASRSNIAFMGTLVRCGKAKGVVIGTGENSEFGEVFKMMQAEEAPKTPLQKSMDLLGKQLSFYSFGIIGIIMLVGWLLGKDILEMFTISVSLAVAAIPEGLPIVVTVTLALGVMRMVKKRAIVKKLPIVETLGCCNVICSDKTGTLTKNEMTVTHIFTSDGLHAEVTGVGYNQFGEVIVDGDVVHGFYNPAVSRIVEAGCVCNDAVIRNNTLMGKPTEGALIALAMKMGLDGLQQDYIRKAEYPFSSEQKWMAVKCVHRTQQDRPEICFMKGAYEQVIKYCTTYQSKGQTLTLTQQQRDVQQEKARMGSAGLRVLALASGPELGQLTFLGLVGIIDPPRTGVKEAVTTLIASGVSIKMITGDSQETAIAIASRLGLYSKTSQSVSGEEIDAMDVQQLSQIVPKVAVFYRASPRHKMKIIKSLQKNGSVVAMTGDGVNDAVALKAADIGVAMGQTGTDVCKEAADMILVDDDFQTIMSAIEEGKGIYNNIKNFVRFQLSTSIAALTLISLATLMNFPNPLNAMQILWINIIMDGPPAQSLGVEPVDKDVIRKPPRNWKDSILTKNLILKILVSSIIIVCGTLFVFWRELRDNVITPRDTTMTFTCFVFFDMFNALSSRSQTKSVFEIGLCSNKMFCYAVLGSIMGQLLVIYFPPLQKVFQTESLSILDLLFLLGLTSSVCIVAEIIKKVERSREKIQKHVSSTSSSFLEV.

Residues 1–75 (MKVARFQKIP…SEDEPLWKKY (75 aa)) lie on the Cytoplasmic side of the membrane. Residues 76–96 (ISQFKNPLIMLLLASAVISVL) traverse the membrane as a helical segment. The Extracellular segment spans residues 97 to 98 (MH). A helical membrane pass occupies residues 99–119 (QFDDAVSITVAILIVVTVAFV). Topologically, residues 120–267 (QEYRSEKSLE…LQKSMDLLGK (148 aa)) are cytoplasmic. Residues 268-288 (QLSFYSFGIIGIIMLVGWLLG) traverse the membrane as a helical segment. Residues 289–302 (KDILEMFTISVSLA) lie on the Extracellular side of the membrane. Residues 303-323 (VAAIPEGLPIVVTVTLALGVM) traverse the membrane as a helical segment. The Cytoplasmic portion of the chain corresponds to 324–703 (RMVKKRAIVK…IYNNIKNFVR (380 aa)). Asp-350 acts as the 4-aspartylphosphate intermediate in catalysis. Mg(2+)-binding residues include Asp-643 and Asp-647. The helical transmembrane segment at 704–724 (FQLSTSIAALTLISLATLMNF) threads the bilayer. Topologically, residues 725–732 (PNPLNAMQ) are extracellular. A helical transmembrane segment spans residues 733–753 (ILWINIIMDGPPAQSLGVEPV). Topologically, residues 754–773 (DKDVIRKPPRNWKDSILTKN) are cytoplasmic. The chain crosses the membrane as a helical span at residues 774–794 (LILKILVSSIIIVCGTLFVFW). Residues 795-842 (RELRDNVITPRDTTMTFTCFVFFDMFNALSSRSQTKSVFEIGLCSNKM) lie on the Extracellular side of the membrane. The chain crosses the membrane as a helical span at residues 843-863 (FCYAVLGSIMGQLLVIYFPPL). The Cytoplasmic segment spans residues 864–873 (QKVFQTESLS). Residues 874 to 894 (ILDLLFLLGLTSSVCIVAEII) traverse the membrane as a helical segment. Topologically, residues 895-918 (KKVERSREKIQKHVSSTSSSFLEV) are extracellular.

The protein belongs to the cation transport ATPase (P-type) (TC 3.A.3) family. Type IIA subfamily. Monomer. Homodimer.

The protein resides in the golgi apparatus. It is found in the trans-Golgi network membrane. It localises to the golgi stack membrane. The enzyme catalyses Ca(2+)(in) + ATP + H2O = Ca(2+)(out) + ADP + phosphate + H(+). It carries out the reaction Mn(2+)(in) + ATP + H2O = Mn(2+)(out) + ADP + phosphate + H(+). In terms of biological role, ATP-driven pump that supplies the Golgi apparatus with Ca(2+) and Mn(2+) ions, both essential cofactors for processing and trafficking of newly synthesized proteins in the secretory pathway. Within a catalytic cycle, acquires Ca(2+) or Mn(2+) ions on the cytoplasmic side of the membrane and delivers them to the lumenal side. The transfer of ions across the membrane is coupled to ATP hydrolysis and is associated with a transient phosphorylation that shifts the pump conformation from inward-facing to outward-facing state. Plays a primary role in the maintenance of Ca(2+) homeostasis in the trans-Golgi compartment with a functional impact on Golgi and post-Golgi protein sorting as well as a structural impact on cisternae morphology. Responsible for loading the Golgi stores with Ca(2+) ions in keratinocytes, contributing to keratinocyte differentiation and epidermis integrity. Participates in Ca(2+) and Mn(2+) ions uptake into the Golgi store of hippocampal neurons and regulates protein trafficking required for neural polarity. May also play a role in the maintenance of Ca(2+) and Mn(2+) homeostasis and signaling in the cytosol while preventing cytotoxicity. In Pongo abelii (Sumatran orangutan), this protein is Calcium-transporting ATPase type 2C member 1 (ATP2C1).